Here is a 378-residue protein sequence, read N- to C-terminus: tRNA (guanine(26)-N(2))-dimethyltransferase (378 aa).

Residues 4-374 enclose the Trm1 methyltransferase domain; sequence KEVTEGKVRI…KEYEEITKCI (371 aa). Positions 44, 69, 87, 114, and 115 each coordinate S-adenosyl-L-methionine. Residues C246, C249, C263, and C266 each contribute to the Zn(2+) site.

It belongs to the class I-like SAM-binding methyltransferase superfamily. Trm1 family.

The catalysed reaction is guanosine(26) in tRNA + 2 S-adenosyl-L-methionine = N(2)-dimethylguanosine(26) in tRNA + 2 S-adenosyl-L-homocysteine + 2 H(+). Dimethylates a single guanine residue at position 26 of a number of tRNAs using S-adenosyl-L-methionine as donor of the methyl groups. The sequence is that of tRNA (guanine(26)-N(2))-dimethyltransferase from Saccharolobus solfataricus (strain ATCC 35092 / DSM 1617 / JCM 11322 / P2) (Sulfolobus solfataricus).